We begin with the raw amino-acid sequence, 258 residues long: Imidazole glycerol phosphate synthase subunit HisF (258 aa).

Residues Asp11 and Asp130 contribute to the active site.

This sequence belongs to the HisA/HisF family. Heterodimer of HisH and HisF.

The protein resides in the cytoplasm. It carries out the reaction 5-[(5-phospho-1-deoxy-D-ribulos-1-ylimino)methylamino]-1-(5-phospho-beta-D-ribosyl)imidazole-4-carboxamide + L-glutamine = D-erythro-1-(imidazol-4-yl)glycerol 3-phosphate + 5-amino-1-(5-phospho-beta-D-ribosyl)imidazole-4-carboxamide + L-glutamate + H(+). It participates in amino-acid biosynthesis; L-histidine biosynthesis; L-histidine from 5-phospho-alpha-D-ribose 1-diphosphate: step 5/9. Functionally, IGPS catalyzes the conversion of PRFAR and glutamine to IGP, AICAR and glutamate. The HisF subunit catalyzes the cyclization activity that produces IGP and AICAR from PRFAR using the ammonia provided by the HisH subunit. The polypeptide is Imidazole glycerol phosphate synthase subunit HisF (Nitrobacter hamburgensis (strain DSM 10229 / NCIMB 13809 / X14)).